Reading from the N-terminus, the 515-residue chain is Protein nucleotidyltransferase YdiU (515 aa).

ATP is bound by residues G101, G103, R104, K124, D136, G137, R194, and R201. D269 functions as the Proton acceptor in the catalytic mechanism. Residues N270 and D279 each coordinate Mg(2+). D279 is an ATP binding site.

Belongs to the SELO family. Requires Mg(2+) as cofactor. The cofactor is Mn(2+).

It catalyses the reaction L-seryl-[protein] + ATP = 3-O-(5'-adenylyl)-L-seryl-[protein] + diphosphate. It carries out the reaction L-threonyl-[protein] + ATP = 3-O-(5'-adenylyl)-L-threonyl-[protein] + diphosphate. The enzyme catalyses L-tyrosyl-[protein] + ATP = O-(5'-adenylyl)-L-tyrosyl-[protein] + diphosphate. The catalysed reaction is L-histidyl-[protein] + UTP = N(tele)-(5'-uridylyl)-L-histidyl-[protein] + diphosphate. It catalyses the reaction L-seryl-[protein] + UTP = O-(5'-uridylyl)-L-seryl-[protein] + diphosphate. It carries out the reaction L-tyrosyl-[protein] + UTP = O-(5'-uridylyl)-L-tyrosyl-[protein] + diphosphate. Functionally, nucleotidyltransferase involved in the post-translational modification of proteins. It can catalyze the addition of adenosine monophosphate (AMP) or uridine monophosphate (UMP) to a protein, resulting in modifications known as AMPylation and UMPylation. The chain is Protein nucleotidyltransferase YdiU from Cytophaga hutchinsonii (strain ATCC 33406 / DSM 1761 / CIP 103989 / NBRC 15051 / NCIMB 9469 / D465).